Here is an 864-residue protein sequence, read N- to C-terminus: Leucine--tRNA ligase (864 aa).

The 'HIGH' region motif lies at 47–57 (PYPSGNLHMGH). Positions 298-317 (SEQDRVADDRPKRGVATGGT) are disordered. A compositionally biased stretch (basic and acidic residues) spans 299-309 (EQDRVADDRPK). Residues 622–626 (KMSKS) carry the 'KMSKS' region motif. Lys625 provides a ligand contact to ATP.

Belongs to the class-I aminoacyl-tRNA synthetase family.

Its subcellular location is the cytoplasm. The enzyme catalyses tRNA(Leu) + L-leucine + ATP = L-leucyl-tRNA(Leu) + AMP + diphosphate. This chain is Leucine--tRNA ligase, found in Synechococcus sp. (strain RCC307).